Consider the following 331-residue polypeptide: Aldo-keto reductase family 7 member A3 (331 aa).

Ser-6 bears the Phosphoserine mark. Residues Met-17, Asp-44, and Tyr-49 each contribute to the NADPH site. Residue Tyr-49 is the Proton donor of the active site. At Ser-85 the chain carries Phosphoserine. 9 residues coordinate NADPH: His-113, Ser-143, Asn-144, Asn-198, Leu-200, Gly-202, Lys-208, Tyr-209, and Arg-222. Thr-227 is modified (phosphothreonine). The NADPH site is built by Ser-290, Gln-294, and Asn-298.

Belongs to the aldo/keto reductase family. Aldo/keto reductase 2 subfamily. In terms of assembly, homodimer. Expressed in colon, kidney, liver, pancreas, adenocarcinoma and endometrium.

Its subcellular location is the cytoplasm. The enzyme catalyses a primary alcohol + NADP(+) = an aldehyde + NADPH + H(+). It carries out the reaction aflatoxin B1 dialdehyde + NADPH + H(+) = aflatoxin B1 C(6a)-monoaldehyde + NADP(+). The catalysed reaction is aflatoxin B1 dialdehyde + NADPH + H(+) = aflatoxin B1 C(8)-monoaldehyde + NADP(+). It catalyses the reaction aflatoxin B1 C(6a)-monoaldehyde + NADPH + 2 H(+) = aflatoxin B1 triol + NADP(+). Inhibited by citrate. Catalyzes the NADPH-dependent reduction of various carbonyl-containing compounds, including aldehydes, ketones, and toxic products from cellular metabolism or environmental exposure. Can reduce the dialdehyde form of aflatoxin B1 (AFB1) into alcohol derivatives, via monoaldehydes intermediates. Can reduce the dialdehyde form of aflatoxin B1 (AFB1) into alcohol derivatives, via monoaldehydes intermediates, thus preventing the formation of protein adducts that contribute to AFB1-induced toxicity. This is Aldo-keto reductase family 7 member A3 from Homo sapiens (Human).